A 453-amino-acid chain; its full sequence is UPF0210 protein MM_0081 (453 aa).

The protein belongs to the UPF0210 family.

This chain is UPF0210 protein MM_0081, found in Methanosarcina mazei (strain ATCC BAA-159 / DSM 3647 / Goe1 / Go1 / JCM 11833 / OCM 88) (Methanosarcina frisia).